The following is a 104-amino-acid chain: Large ribosomal subunit protein bL21 (104 aa).

The protein belongs to the bacterial ribosomal protein bL21 family. As to quaternary structure, part of the 50S ribosomal subunit. Contacts protein L20.

In terms of biological role, this protein binds to 23S rRNA in the presence of protein L20. This chain is Large ribosomal subunit protein bL21, found in Azobacteroides pseudotrichonymphae genomovar. CFP2.